The sequence spans 160 residues: 2-C-methyl-D-erythritol 2,4-cyclodiphosphate synthase (160 aa).

Positions 12 and 14 each coordinate a divalent metal cation. 4-CDP-2-C-methyl-D-erythritol 2-phosphate is bound by residues 12 to 14 and 38 to 39; these read DVH and HS. An a divalent metal cation-binding site is contributed by H46. 4-CDP-2-C-methyl-D-erythritol 2-phosphate is bound by residues 60 to 62, 65 to 69, 136 to 139, F143, and R146; these read DIG, FPDTD, and TTTE.

Belongs to the IspF family. As to quaternary structure, homotrimer. Requires a divalent metal cation as cofactor.

The enzyme catalyses 4-CDP-2-C-methyl-D-erythritol 2-phosphate = 2-C-methyl-D-erythritol 2,4-cyclic diphosphate + CMP. It functions in the pathway isoprenoid biosynthesis; isopentenyl diphosphate biosynthesis via DXP pathway; isopentenyl diphosphate from 1-deoxy-D-xylulose 5-phosphate: step 4/6. Functionally, involved in the biosynthesis of isopentenyl diphosphate (IPP) and dimethylallyl diphosphate (DMAPP), two major building blocks of isoprenoid compounds. Catalyzes the conversion of 4-diphosphocytidyl-2-C-methyl-D-erythritol 2-phosphate (CDP-ME2P) to 2-C-methyl-D-erythritol 2,4-cyclodiphosphate (ME-CPP) with a corresponding release of cytidine 5-monophosphate (CMP). The protein is 2-C-methyl-D-erythritol 2,4-cyclodiphosphate synthase of Acinetobacter baumannii (strain SDF).